The sequence spans 485 residues: Outer membrane protein OprM (485 aa).

A signal peptide spans 1–17; sequence MKRSFLSLAVAAVVLSG. A lipid anchor (N-palmitoyl cysteine) is attached at C18. The S-diacylglycerol cysteine moiety is linked to residue C18.

This sequence belongs to the outer membrane factor (OMF) (TC 1.B.17) family. Component of the MexAB-OprM multidrug efflux complex, composed of six MexA subunits forming a hexameric tube, binding to a MexB trimer, which interact with the trimeric OprM outer membrane channel protein. The OprM homotrimer forms a 135 Angstroms-long pore. It consists of a beta-barrel, which is probably inserted in the outer membrane, and an alpha-barrel formed by alpha-helices which probably spans the periplasm. In the ground state the periplasmic end is closed, while the outer membrane end opening is 6-8 Angstroms in diameter. OprM does not directly contact MexB; instead, MexA joins MexB and OprM by forming a funnel-like hexamer anchored to the inner membrane. MexA may initially form a hexameric ring complex with MexB prior to OprM, then OprM undergoes a conformational change as it contacts MexA, allowing the periplasmic gate to open. It is thought that, under high intracellular substrate concentration, MexB ejects substrate into the tunnel formed by MexA-OprM; as the substrate level declines, conformational changes in MexB cause efflux to reduce and stop and the complex shifts to the closed state. MexB subunit acts as a substrate:proton antiporter and activity is enhanced significantly when in complex with MexA and OprM, in vitro.

The protein resides in the cell outer membrane. With respect to regulation, export of antibiotics and solvents is dramatically decreased in the presence of the protonophore carbonyl cyanide m-chlorophenylhydrazone (CCCP), therefore may be driven by a proton gradient. Antibiotic efflux is inhibited by pyridopyrimidine derivatives, such as ABI-PP, acting by binding to a hydrophobic pocket in MexB. Its function is as follows. The outer membrane component of the MexAB-OprM efflux system that confers multidrug resistance. Functions as the major efflux pump for n-hexane and p-xylene efflux. Has been shown in one study to be involved in the active efflux of the autoinducer N-(3-oxododecanoyl) homoserine lactone, thereby playing an indirect role in quorum-sensing; but has been shown in another study not to be involved in efflux of this autoinducer. Over-expression of the pump increases antibiotic and solvent efflux capacities. Can replace the OprJ outer membrane component of the MexCD-OprJ pump; the antibiotics exported are those exported by the intact MexCD pump, showing that efflux substrate specificity is not conferred by this component. Serves as the outer membrane component for the MexXY efflux system. Implicated in the secretion of the siderophore pyoverdine. OprM is probably involved in the efflux of the siderophore across the outer membrane. This chain is Outer membrane protein OprM (oprM), found in Pseudomonas aeruginosa (strain ATCC 15692 / DSM 22644 / CIP 104116 / JCM 14847 / LMG 12228 / 1C / PRS 101 / PAO1).